The following is a 1208-amino-acid chain: Chromosome partition protein Smc (1208 aa).

Residue 32 to 39 (PNGCGKSN) coordinates ATP. Coiled coils occupy residues 170 to 205 (VTKY…GERI), 239 to 504 (EARA…ARVQ), and 694 to 1054 (VIER…QLQD).

The protein belongs to the SMC family. As to quaternary structure, homodimer.

Its subcellular location is the cytoplasm. Its function is as follows. Required for chromosome condensation and partitioning. This is Chromosome partition protein Smc from Thauera aminoaromatica.